Reading from the N-terminus, the 366-residue chain is Terpene cyclase-like protein flvF (366 aa).

It belongs to the terpene synthase family. As to quaternary structure, homodimer.

The enzyme catalyses N,N-dimethyl-cadaverine + 2,6,9-trimethyl-13-oxatetracyclo[6.3.1.1(6,9).0(1,5)]tridecane carbocation = pre-flavunoidine + H(+). The protein operates within secondary metabolite biosynthesis; terpenoid biosynthesis. Its function is as follows. Terpene cyclase-like protein; part of the gene cluster that mediates the biosynthesis of flavunoidine, an alkaloidal terpenoid with a tetracyclic cage-like core connected to dimethylcadaverine via a C-N bond and acylated with 5,5-dimethyl-L-pipecolate. The tetracyclic core is synthesized by the terpene cyclase flvE and the cytochrome P450 monooxygenase flvD. The terpene cyclase flvE catalyzes the cyclization of farnesyl pyrophosphate (FPP) to form (1R,4R,5S)-(+)-acoradiene and the cytochrome P450 monooxygenase flvD is then responsible for oxidative conversion of (1R,4R,5S)-(+)-acoradiene into the tetracyclic cage present in the final product flavunoidine. In parallel, the N-methyltransferase flvH dimethylates L-lysine to give N,N-dimethyl-L-Lysin which is decarboxylated by flvG to afford dimethylcadaverine. The terpene cyclase-like protein flvF is the enzyme that attaches the dimethylcadaverine precusor at the C-7 of the tetracyclic cage to yield pre-flavunoidine. The cytochrome monooxygenase flvC hydroxylates the C-10 position of pre-flavunoidine whereas the NRPS flvI acylates the terpenoid core at the hydroxylated C-10 with dimethylpipecolate to yield final flavunoidine. The bifunctional enzyme flvA and the dehydrogenase flvB are responsible for the synthesis of the dimethylpipecolate precursor. The PLP-dependent lyase domain of flvA might use L-O-acetyl-homoserine and alpha-keto-isovalerate to form an intermediary ketone that can cyclize intramolecularly to yield an imine. The imine can be reduced by flvB to yield the 6-carboxylated pipecolate. The C-terminal alpha-KG-dependent oxygenase domain of flvA is then proposed to catalyze the decarboxylation to yield dimethylpipecolate. This chain is Terpene cyclase-like protein flvF, found in Aspergillus flavus (strain ATCC 200026 / FGSC A1120 / IAM 13836 / NRRL 3357 / JCM 12722 / SRRC 167).